The following is a 129-amino-acid chain: Histone H2B.2 (129 aa).

A compositionally biased stretch (basic and acidic residues) spans 1 to 19 (MAPKAEKKPASKAPAEKKP). The disordered stretch occupies residues 1–38 (MAPKAEKKPASKAPAEKKPAAKKTATSGTKKRSKTRKE). N6-acetyllysine; alternate occurs at positions 7 and 8. Residues Lys7 and Lys8 each participate in a glycyl lysine isopeptide (Lys-Gly) (interchain with G-Cter in SUMO); alternate cross-link. Phosphoserine is present on Ser11. Lys12 carries the post-translational modification N6-acetyllysine. Position 17 is an N6-acetyllysine; alternate (Lys17). Lys17 participates in a covalent cross-link: Glycyl lysine isopeptide (Lys-Gly) (interchain with G-Cter in SUMO); alternate. A Glycyl lysine isopeptide (Lys-Gly) (interchain with G-Cter in SUMO) cross-link involves residue Lys18. A Glycyl lysine isopeptide (Lys-Gly) (interchain with G-Cter in ubiquitin) cross-link involves residue Lys123.

It belongs to the histone H2B family. In terms of assembly, the nucleosome is a histone octamer containing two molecules each of H2A, H2B, H3 and H4 assembled in one H3-H4 heterotetramer and two H2A-H2B heterodimers. The octamer wraps approximately 147 bp of DNA. Post-translationally, monoubiquitinated by the UBC2-BRE1 complex to form H2BK123ub1. H2BK123ub1 gives a specific tag for epigenetic transcriptional activation and is also prerequisite for H3K4me and H3K79me formation. H2BK123ub1 also modulates the formation of double-strand breaks during meiosis and is a prerequisite for DNA-damage checkpoint activation. Phosphorylated by STE20 to form H2BS10ph during progression through meiotic prophase. May be correlated with chromosome condensation. In terms of processing, acetylated by GCN5 to form H2BK11ac and H2BK16ac. H2BK16ac can also be formed by ESA1. Acetylation of N-terminal lysines and particularly formation of H2BK11acK16ac has a positive effect on transcription. Post-translationally, sumoylation to form H2BK6su or H2BK7su, and probably also H2BK16su or H2BK17su, occurs preferentially near the telomeres and represses gene transcription.

It is found in the nucleus. It localises to the chromosome. Functionally, core component of nucleosome. Nucleosomes wrap and compact DNA into chromatin, limiting DNA accessibility to the cellular machineries which require DNA as a template. Histones thereby play a central role in transcription regulation, DNA repair, DNA replication and chromosomal stability. DNA accessibility is regulated via a complex set of post-translational modifications of histones, also called histone code, and nucleosome remodeling. This is Histone H2B.2 (HTB2) from Debaryomyces hansenii (strain ATCC 36239 / CBS 767 / BCRC 21394 / JCM 1990 / NBRC 0083 / IGC 2968) (Yeast).